The sequence spans 683 residues: THO complex subunit 5 homolog (683 aa).

A disordered region spans residues 1 to 42 (MSSESSKKRKPKVIRSDGTPTEGKRNRSDTEQEGKYYSEEAE). At S2 the chain carries N-acetylserine. The interval 2–144 (SSESSKKRKP…YEVMHLQKEI (143 aa)) is interaction with CSF1R. The tract at residues 2 to 199 (SSESSKKRKP…RLDWELEQRK (198 aa)) is interaction with THOC7. Phosphoserine is present on residues S5 and S6. The Nuclear localization signal motif lies at 7 to 10 (KKRK). Residues 22 to 42 (EGKRNRSDTEQEGKYYSEEAE) are compositionally biased toward basic and acidic residues. Residues 81 to 247 (AIEIEERRIQ…QASLPVQEYL (167 aa)) are a coiled coil. Residue K153 forms a Glycyl lysine isopeptide (Lys-Gly) (interchain with G-Cter in SUMO2) linkage. Residue Y225 is modified to Phosphotyrosine. Residues 247–683 (LFMPFDQAHK…NHPQGFFSHR (437 aa)) form a tandem RWD domains region. Residues 301-336 (FKPPEDSQDDESDSDAEEEQTTKRRRPTLGVQLDDK) are disordered. Residues 306–319 (DSQDDESDSDAEEE) are compositionally biased toward acidic residues. Residues S307, S312, and S314 each carry the phosphoserine modification. T328 bears the Phosphothreonine mark.

Belongs to the THOC5 family. As to quaternary structure, component of the THO subcomplex, which is composed of THOC1, THOC2, THOC3, THOC5, THOC6 and THOC7. The THO subcomplex interacts with DDX39B to form the THO-DDX39B complex which multimerizes into a 28-subunit tetrameric assembly. Component of the transcription/export (TREX) complex at least composed of ALYREF/THOC4, DDX39B, SARNP/CIP29, CHTOP and the THO subcomplex; in the complex interacts with THOC1, THOC2, THOC5, THOC6 and THOC7; forms a coiled-coil dimer with THOC7; together with THOC6 and THOC7, plays a key structural role in the oligomerization of the THO-DDX39B complex. TREX seems to have a dynamic structure involving ATP-dependent remodeling. Interacts (via N-terminus) with the NTF2 domain of NXF1. Interacts with phosphorylated CSF1R. Forms a complex with CEBPB. Interacts with CPSF6; indicative for an association with the cleavage factor Im (CFIm) complex. Interacts with THOC1. Interacts with LUZP4. Interacts with NCBP3. In terms of processing, phosphorylated on tyrosine upon binding to activated CSF1R; which causes a dissociation of the two proteins. Phosphorylation on Ser-5 and/or Ser-6 is required for nuclear export. Phosphorylated on Thr-328 in insulin-stimulated adipocytes. Ubiquitously expressed, with highest levels in testis, liver and heart.

The protein resides in the nucleus. It is found in the cytoplasm. Component of the THO subcomplex of the TREX complex which is thought to couple mRNA transcription, processing and nuclear export, and which specifically associates with spliced mRNA and not with unspliced pre-mRNA. Plays a key structural role in the oligomerization of the THO-DDX39B complex. TREX is recruited to spliced mRNAs by a transcription-independent mechanism, binds to mRNA upstream of the exon-junction complex (EJC) and is recruited in a splicing- and cap-dependent manner to a region near the 5' end of the mRNA where it functions in mRNA export to the cytoplasm via the TAP/NXF1 pathway. THOC5 in conjunction with ALYREF/THOC4 functions in NXF1-NXT1 mediated nuclear export of HSP70 mRNA; both proteins enhance the RNA binding activity of NXF1 and are required for NXF1 localization to the nuclear rim. Involved in transcription elongation and genome stability. Involved in alternative polyadenylation site choice by recruiting CPSF6 to 5' region of target genes; probably mediates association of the TREX and CFIm complexes. In terms of biological role, regulates the expression of myeloid transcription factors CEBPA, CEBPB and GAB2 by enhancing the levels of phosphatidylinositol 3,4,5-trisphosphate. May be involved in the differentiation of granulocytes and adipocytes. Essential for hematopoietic primitive cell survival and plays an integral role in monocytic development. This is THO complex subunit 5 homolog (Thoc5) from Mus musculus (Mouse).